We begin with the raw amino-acid sequence, 764 residues long: Nucleolar transcription factor 1 (764 aa).

Methionine 1 bears the N-acetylmethionine mark. The segment at methionine 1–arginine 21 is disordered. 2 consecutive DNA-binding regions (HMG box) follow at residues proline 112–arginine 180 and proline 196–isoleucine 264. Phosphothreonine is present on threonine 201. 12 positions are modified to phosphoserine: serine 273, serine 336, serine 364, serine 389, serine 412, serine 433, serine 435, serine 484, serine 495, serine 546, serine 584, and serine 638. The HMG box 3 DNA-binding region spans threonine 298–leucine 362. A disordered region spans residues asparagine 381–valine 411. DNA-binding regions (HMG box) lie at residues proline 407 to arginine 475, proline 482 to arginine 549, and lysine 568 to valine 634. The interval arginine 459 to arginine 487 is disordered. The interval serine 546 to glutamine 576 is disordered. Positions tyrosine 648–asparagine 764 are disordered. Polar residues predominate over residues proline 664–lysine 674. Positions serine 677–serine 745 are enriched in acidic residues. Over residues glutamate 746–serine 758 the composition is skewed to low complexity.

As to quaternary structure, homodimer. Part of Pol I pre-initiation complex (PIC), in which Pol I core assembles with RRN3 and promoter-bound UTBF and SL1/TIF-IB complex. Interacts with TOP2A in the context of Pol I complex. Interacts with TBP. Interacts with TAF1A. Interacts with RASL11A. Binds to IRS1 and PIK3CA. Interacts with DHX33. Interacts with PHF6. Interacts with CEBPA (isoform 1 and isoform 4). Interacts with DDX11. Interacts with NOP53. Interacts with ALKBH2. Phosphorylated and activated by PIK3CA.

It localises to the nucleus. It is found in the nucleolus. Functionally, recognizes the ribosomal RNA gene promoter and activates transcription mediated by RNA polymerase I (Pol I) through cooperative interactions with the transcription factor SL1/TIF-IB complex. It binds specifically to the upstream control element and can activate Pol I promoter escape. The sequence is that of Nucleolar transcription factor 1 (UBTF) from Homo sapiens (Human).